Reading from the N-terminus, the 374-residue chain is uncharacterized protein (374 aa).

A divalent metal cation contacts are provided by D158, H160, D190, N221, H312, and H314.

This sequence belongs to the metallophosphoesterase superfamily. The cofactor is a divalent metal cation.

This is an uncharacterized protein from Campylobacter jejuni subsp. jejuni serotype O:2 (strain ATCC 700819 / NCTC 11168).